Reading from the N-terminus, the 419-residue chain is CinA-like protein (419 aa).

The protein belongs to the CinA family.

This chain is CinA-like protein, found in Synechococcus sp. (strain CC9902).